The sequence spans 178 residues: Large ribosomal subunit protein uL6 (178 aa).

This sequence belongs to the universal ribosomal protein uL6 family. As to quaternary structure, part of the 50S ribosomal subunit.

This protein binds to the 23S rRNA, and is important in its secondary structure. It is located near the subunit interface in the base of the L7/L12 stalk, and near the tRNA binding site of the peptidyltransferase center. The chain is Large ribosomal subunit protein uL6 from Thermoplasma acidophilum (strain ATCC 25905 / DSM 1728 / JCM 9062 / NBRC 15155 / AMRC-C165).